A 430-amino-acid chain; its full sequence is Adenylosuccinate synthetase (430 aa).

Residues 12 to 18 (GDEGKGK) and 40 to 42 (GHT) each bind GTP. D13 acts as the Proton acceptor in catalysis. Positions 13 and 40 each coordinate Mg(2+). IMP-binding positions include 13–16 (DEGK), 38–41 (NAGH), T128, R142, Q223, T238, and R302. The active-site Proton donor is the H41. Residue 298–304 (TTTGRPR) coordinates substrate. GTP contacts are provided by residues R304, 330–332 (SID), and 412–414 (SVG).

This sequence belongs to the adenylosuccinate synthetase family. Homodimer. Mg(2+) is required as a cofactor.

The protein resides in the cytoplasm. The enzyme catalyses IMP + L-aspartate + GTP = N(6)-(1,2-dicarboxyethyl)-AMP + GDP + phosphate + 2 H(+). It functions in the pathway purine metabolism; AMP biosynthesis via de novo pathway; AMP from IMP: step 1/2. Functionally, plays an important role in the de novo pathway of purine nucleotide biosynthesis. Catalyzes the first committed step in the biosynthesis of AMP from IMP. In Streptococcus equi subsp. zooepidemicus (strain H70), this protein is Adenylosuccinate synthetase.